Here is a 316-residue protein sequence, read N- to C-terminus: Na(+)/H(+) exchange regulatory cofactor NHE-RF2 (316 aa).

Residues 11-91 (LCRLVRGEQG…ETRLLVVDKE (81 aa)) form the PDZ 1 domain. The segment at 109 to 148 (QRGLPPAHDPWEPKPDWARAGSLSSDAGQKDVNGPPRELR) is disordered. Phosphoserine is present on residues Ser-130, Ser-183, and Ser-254. One can recognise a PDZ 2 domain in the interval 151 to 231 (LCHLRKGPQG…EARLLLVDPE (81 aa)). The interval 244 to 303 (TEEHVEGPLPSPITNGTSPAQDASAWKRDPFQESGLHLSPTAAEAKEKARATRVNKRAPQ) is disordered. Polar residues predominate over residues 255-264 (PITNGTSPAQ). Phosphoserine is present on Ser-282.

Homodimer, and heterodimer with NHERF1. Binds ADRB2, SLC9A3, P2RY1, P2YR2, SRY, RDX, PDZK1 and LPAR2. Found in a complex with EZR, PODXL and NHERF2. Interacts (via the PDZ domains) with PODXL (via the C-terminal PDZ-binding motif DTHL); interaction is detected in glomerular epithelium cells. Binds PODXL. Interacts with SGK1 and KCNJ1/ROMK1. Interacts (via the PDZ domains) with SLC26A6. In terms of tissue distribution, detected in kidney glomeruli.

The protein localises to the endomembrane system. It localises to the nucleus. It is found in the apical cell membrane. Scaffold protein that connects plasma membrane proteins with members of the ezrin/moesin/radixin family and thereby helps to link them to the actin cytoskeleton and to regulate their surface expression. Necessary for cAMP-mediated phosphorylation and inhibition of SLC9A3. May also act as scaffold protein in the nucleus. This Oryctolagus cuniculus (Rabbit) protein is Na(+)/H(+) exchange regulatory cofactor NHE-RF2 (NHERF2).